Consider the following 868-residue polypeptide: MATFISVQLKKTSEVDLAKPLVKFIQQTYPSGGEEQAQYCRAAEELSKLRRAAVGRPLDKHEGALETLLRYYDQICSIEPKFPFSENQICLTFTWKDAFDKGSLFGGSVKLALASLGYEKSCVLFNCAALASQIAAEQNLDNDEGLKIAAKHYQFASGAFLHIKETVLSALSREPTVDISPDTVGTLSLIMLAQAQEVFFLKATRDKMKDAIIAKLANQAADYFGDAFKQCQYKDTLPKEVFPVLAAKHCIMQANAEYHQSILAKQQKKFGEEIARLQHAAELIKTVASRYDEYVNVKDFSDKINRALAAAKKDNDFIYHDRVPDLKDLDPIGKATLVKSTPVNVPISQKFTDLFEKMVPVSVQQSLAAYNQRKADLVNRSIAQMREATTLANGVLASLNLPAAIEDVSGDTVPQSILTKSRSVIEQGGIQTVDQLIKELPELLQRNREILDESLRLLDEEEATDNDLRAKFKERWQRTPSNELYKPLRAEGTNFRTVLDKAVQADGQVKECYQSHRDTIVLLCKPEPELNAAIPSANPAKTMQGSEVVNVLKSLLSNLDEVKKEREGLENDLKSVNFDMTSKFLTALAQDGVINEEALSVTELDRVYGGLTTKVQESLKKQEGLLKNIQVSHQEFSKMKQSNNEANLREEVLKNLATAYDNFVELVANLKEGTKFYNELTEILVRFQNKCSDIVFARKTERDELLKDLQQSIAREPSAPSIPTPAYQSSPAGGHAPTPPTPAPRTMPPTKPQPPARPPPPVLPANRAPSATAPSPVGAGTAAPAPSQTPGSAPPPQAQGPPYPTYPGYPGYCQMPMPMGYNPYAYGQYNMPYPPVYHQSPGQAPYPGPQQPSYPFPQPPQQSYYPQQ.

The residue at position 2 (alanine 2) is an N-acetylalanine. One can recognise a BRO1 domain in the interval 3–392 (TFISVQLKKT…AQMREATTLA (390 aa)). The tract at residues 176–503 (TVDISPDTVG…NFRTVLDKAV (328 aa)) is interaction with CHMP4A, CHMP4B and CHMP4C. The interval 176–868 (TVDISPDTVG…PPQQSYYPQQ (693 aa)) is interaction with EIAV p9. At lysine 215 the chain carries N6-acetyllysine. The interval 418–868 (LTKSRSVIEQ…PPQQSYYPQQ (451 aa)) is interaction with SDCBP. Phosphothreonine is present on threonine 479. Serine 481 carries the phosphoserine modification. The tract at residues 503–868 (VQADGQVKEC…PPQQSYYPQQ (366 aa)) is self-association. 2 disordered regions span residues 713–809 (IARE…YPGY) and 832–868 (PYPPVYHQSPGQAPYPGPQQPSYPFPQPPQQSYYPQQ). The segment at 717–720 (PSAP) is interaction with TSG101. Serine 730 carries the post-translational modification Phosphoserine. A compositionally biased stretch (pro residues) spans 737 to 763 (PTPPTPAPRTMPPTKPQPPARPPPPVL). Residues threonine 738 and threonine 741 each carry the phosphothreonine modification. Arginine 745 is modified (omega-N-methylarginine). Positions 778–791 (GAGTAAPAPSQTPG) are enriched in low complexity. Composition is skewed to pro residues over residues 792–807 (SAPPPQAQGPPYPTYP) and 844–860 (APYPGPQQPSYPFPQPP). Residues 801 to 806 (PPYPTY) form an interaction with CEP55 region. The tract at residues 864 to 868 (YYPQQ) is essential to promote virus budding.

As to quaternary structure, self-associates. Interacts with SH3KBP1/CIN85. Interacts with PDCD6 in a calcium -dependent manner. Interacts with TSG101 in a calcium-dependent manner; PDCD6IP homooligomerization may be required for TSG101-binding. Interacts with SGSM3. Directly interacts with CHMP4A, CHMP4B and CHMP4C. Directly interacts with CEP55 in a 1:2 stoechiometry. The interaction with CEP55 is required for PDCD6IP targeting to the midbody. May interact with PDGFRB. Interacts with SH3GL1 and SH3GL2/endophilin-1. Forms a complex with SDCBP and SDC2. Found in a complex with F-actin, TJP1/ZO-1 and PARD3. Interacts with CD2AP. Interacts with ARRDC1. Interacts (via BRO1 domain) with the ATG12-ATG3 conjugate; this interaction is bridged by ATG12 and promotes multiple PDCD6IP-mediated functions such as endolysosomal trafficking, macroautophagy and exosome biogenesis. In terms of assembly, (Microbial infection) Interacts with HIV-1 p6. Interacts with HIV-1 p9. (Microbial infection) Interacts with EIAV p9. As to quaternary structure, (Microbial infection) Interacts with Murine leukemia virus Gag polyprotein (via LYPX(n)L motif). In terms of assembly, (Microbial infection) Interacts with ebola virus protein VP40 (via YPx(n)L/I motif). In terms of processing, may be phosphorylated on tyrosine residues by activated PDGFRB.

Its subcellular location is the cytoplasm. It is found in the cytosol. The protein localises to the melanosome. It localises to the cytoskeleton. The protein resides in the microtubule organizing center. Its subcellular location is the centrosome. It is found in the secreted. The protein localises to the extracellular exosome. It localises to the cell junction. The protein resides in the tight junction. Its subcellular location is the midbody. It is found in the midbody ring. Multifunctional protein involved in endocytosis, multivesicular body biogenesis, membrane repair, cytokinesis, apoptosis and maintenance of tight junction integrity. Class E VPS protein involved in concentration and sorting of cargo proteins of the multivesicular body (MVB) for incorporation into intralumenal vesicles (ILVs) that are generated by invagination and scission from the limiting membrane of the endosome. Binds to the phospholipid lysobisphosphatidic acid (LBPA) which is abundant in MVBs internal membranes. The MVB pathway requires the sequential function of ESCRT-O, -I,-II and -III complexes. The ESCRT machinery also functions in topologically equivalent membrane fission events, such as the terminal stages of cytokinesis. Adapter for a subset of ESCRT-III proteins, such as CHMP4, to function at distinct membranes. Required for completion of cytokinesis. May play a role in the regulation of both apoptosis and cell proliferation. Regulates exosome biogenesis in concert with SDC1/4 and SDCBP. By interacting with F-actin, PARD3 and TJP1 secures the proper assembly and positioning of actomyosin-tight junction complex at the apical sides of adjacent epithelial cells that defines a spatial membrane domain essential for the maintenance of epithelial cell polarity and barrier. Its function is as follows. (Microbial infection) Involved in HIV-1 virus budding. Can replace TSG101 it its role of supporting HIV-1 release; this function requires the interaction with CHMP4B. The ESCRT machinery also functions in topologically equivalent membrane fission events, such as enveloped virus budding (HIV-1 and other lentiviruses). The chain is Programmed cell death 6-interacting protein from Homo sapiens (Human).